We begin with the raw amino-acid sequence, 310 residues long: Ribosomal RNA small subunit methyltransferase H (310 aa).

S-adenosyl-L-methionine-binding positions include 32–34, aspartate 52, phenylalanine 79, aspartate 100, and glutamine 107; that span reads GGH.

This sequence belongs to the methyltransferase superfamily. RsmH family.

The protein localises to the cytoplasm. The catalysed reaction is cytidine(1402) in 16S rRNA + S-adenosyl-L-methionine = N(4)-methylcytidine(1402) in 16S rRNA + S-adenosyl-L-homocysteine + H(+). In terms of biological role, specifically methylates the N4 position of cytidine in position 1402 (C1402) of 16S rRNA. This Bacillus thuringiensis subsp. konkukian (strain 97-27) protein is Ribosomal RNA small subunit methyltransferase H.